We begin with the raw amino-acid sequence, 186 residues long: Orotate phosphoribosyltransferase (186 aa).

5-phospho-alpha-D-ribose 1-diphosphate contacts are provided by residues R93, K94, K97, H99, and 119 to 127; that span reads EDVTTTGGS. 2 residues coordinate orotate: T123 and R151.

The protein belongs to the purine/pyrimidine phosphoribosyltransferase family. PyrE subfamily. As to quaternary structure, homodimer. The cofactor is Mg(2+).

It carries out the reaction orotidine 5'-phosphate + diphosphate = orotate + 5-phospho-alpha-D-ribose 1-diphosphate. Its pathway is pyrimidine metabolism; UMP biosynthesis via de novo pathway; UMP from orotate: step 1/2. In terms of biological role, catalyzes the transfer of a ribosyl phosphate group from 5-phosphoribose 1-diphosphate to orotate, leading to the formation of orotidine monophosphate (OMP). The protein is Orotate phosphoribosyltransferase of Pyrococcus horikoshii (strain ATCC 700860 / DSM 12428 / JCM 9974 / NBRC 100139 / OT-3).